A 490-amino-acid polypeptide reads, in one-letter code: MPNEIFPWKIRVDESRGLAGNSGTKKSNHEALSRLQSPLNSPKLQPIGSPQASRKTSGSGSSAPLYPKWSGALSLASSRAASPAPSDSFPTFGYSQLGGLENSSKGSALFNSANSIGTPYLSSRNSNSANEASAMAFHNVSPPSGAESSSESKSFSASGKGNKADTSAEPSLDAFNSTQIKAGSTANSNSTPVEPGEDTIPTAIVVKNIPFSLEKDTLLDHFKQLGIPRPYAFNYHYDNGIFRGLAFANFYRPEEAQVVVQTLNGYEINGRRLRVEWKRQLPAAEREKVEKAKKRQAEERRRKQQYKMFEVSFTDQGLNLNDTGTLETYSRLLLFAHQCIPSREITFETTSKDGNLLNAIRIFCLYFDLDYYARPNGEVLKLVVTHPNKKNTSVSQSQPASPNLRFNMPAPLATRFLQEHSLNGTKSAPITPPPSFAVPLTNQLRSIDDKIYGNESPLQKASTLSSPFNSKNDNDASTSASKQSFGVSHF.

Disordered regions lie at residues 16-63, 76-97, and 138-199; these read RGLA…GSSA, ASSR…YSQL, and HNVS…GEDT. Residues 34 to 62 are compositionally biased toward polar residues; that stretch reads RLQSPLNSPKLQPIGSPQASRKTSGSGSS. 5 positions are modified to phosphoserine: Ser-37, Ser-41, Ser-49, Ser-86, and Ser-141. 2 stretches are compositionally biased toward low complexity: residues 76-88 and 141-160; these read ASSR…PSDS and SPPS…ASGK. The span at 164 to 192 shows a compositional bias: polar residues; sequence ADTSAEPSLDAFNSTQIKAGSTANSNSTP. In terms of domain architecture, RRM spans 202-280; it reads TAIVVKNIPF…RRLRVEWKRQ (79 aa). Ser-397, Ser-401, and Ser-427 each carry phosphoserine. The residue at position 431 (Thr-431) is a Phosphothreonine. 3 positions are modified to phosphoserine: Ser-435, Ser-456, and Ser-466. Positions 457 to 490 are disordered; it reads PLQKASTLSSPFNSKNDNDASTSASKQSFGVSHF.

As to quaternary structure, interacts with csx1. Post-translationally, phosphorylated by sty1.

Its subcellular location is the cytoplasm. In terms of biological role, regulates global gene expression after oxidative stress. Interacts and stabilizes mRNAs and may regulate their transition between different cytoplasmic components after oxidative stress. In Schizosaccharomyces pombe (strain 972 / ATCC 24843) (Fission yeast), this protein is RNA-binding post-transcriptional regulator cip1 (cip1).